The following is a 62-amino-acid chain: Conotoxin Im5.1 (62 aa).

The first 19 residues, 1–19, serve as a signal peptide directing secretion; the sequence is MYCLPVFIILLLLISSAPS. The propeptide occupies 20 to 48; it reads TPPQPRNKDRVHLISLLDNHKQILQRDWN. Tryptophan amide is present on Trp-60.

The protein belongs to the conotoxin T superfamily. Post-translationally, contains 2 disulfide bonds that can be either 'C1-C3, C2-C4' or 'C1-C4, C2-C3', since these disulfide connectivities have been observed for conotoxins with cysteine framework V (for examples, see AC P0DQQ7 and AC P81755). Expressed by the venom duct.

The protein resides in the secreted. The protein is Conotoxin Im5.1 of Conus imperialis (Imperial cone).